The following is a 528-amino-acid chain: Peptide chain release factor 3 (528 aa).

The tr-type G domain occupies 10–278; it reads DRRRTFGIIS…AFVQMAPPPH (269 aa). Residues 19–26, 87–91, and 141–144 each bind GTP; these read SHPDAGKT, DTPGH, and NKLD.

This sequence belongs to the TRAFAC class translation factor GTPase superfamily. Classic translation factor GTPase family. PrfC subfamily.

The protein localises to the cytoplasm. Its function is as follows. Increases the formation of ribosomal termination complexes and stimulates activities of RF-1 and RF-2. It binds guanine nucleotides and has strong preference for UGA stop codons. It may interact directly with the ribosome. The stimulation of RF-1 and RF-2 is significantly reduced by GTP and GDP, but not by GMP. The sequence is that of Peptide chain release factor 3 from Syntrophobacter fumaroxidans (strain DSM 10017 / MPOB).